The following is a 279-amino-acid chain: Large ribosomal subunit protein uL2 (279 aa).

The interval 222 to 279 (GMAMNPVDHPMGGGEGKSKSGGGRRHPKSPWGQLAKGLKTRNKKKASQKLIVRGRNAK) is disordered. A compositionally biased stretch (gly residues) spans 232–242 (MGGGEGKSKSG). The segment covering 259 to 268 (LKTRNKKKAS) has biased composition (basic residues).

It belongs to the universal ribosomal protein uL2 family. As to quaternary structure, part of the 50S ribosomal subunit. Forms a bridge to the 30S subunit in the 70S ribosome.

One of the primary rRNA binding proteins. Required for association of the 30S and 50S subunits to form the 70S ribosome, for tRNA binding and peptide bond formation. It has been suggested to have peptidyltransferase activity; this is somewhat controversial. Makes several contacts with the 16S rRNA in the 70S ribosome. This Chlorobium phaeobacteroides (strain DSM 266 / SMG 266 / 2430) protein is Large ribosomal subunit protein uL2.